A 214-amino-acid chain; its full sequence is 7-cyano-7-deazaguanine synthase (214 aa).

Phe10 to Leu20 provides a ligand contact to ATP. The Zn(2+) site is built by Cys184, Cys193, Cys196, and Cys199.

Belongs to the QueC family. As to quaternary structure, homodimer. It depends on Zn(2+) as a cofactor.

It carries out the reaction 7-carboxy-7-deazaguanine + NH4(+) + ATP = 7-cyano-7-deazaguanine + ADP + phosphate + H2O + H(+). The protein operates within purine metabolism; 7-cyano-7-deazaguanine biosynthesis. In terms of biological role, catalyzes the ATP-dependent conversion of 7-carboxy-7-deazaguanine (CDG) to 7-cyano-7-deazaguanine (preQ(0)). The polypeptide is 7-cyano-7-deazaguanine synthase (Exiguobacterium sp. (strain ATCC BAA-1283 / AT1b)).